Reading from the N-terminus, the 251-residue chain is Thiamine thiazole synthase (251 aa).

Residues S34, E53–K54, G61, V125, and H151–D153 contribute to the NAD(+) site. 2 residues coordinate Fe cation: D153 and H168. M216 serves as a coordination point for NAD(+). R226 serves as a coordination point for glycine.

It belongs to the THI4 family. Homooctamer; tetramer of dimers. It depends on Fe(2+) as a cofactor.

It catalyses the reaction hydrogen sulfide + glycine + NAD(+) = ADP-5-ethyl-4-methylthiazole-2-carboxylate + nicotinamide + 3 H2O + H(+). It functions in the pathway cofactor biosynthesis; thiamine diphosphate biosynthesis. In terms of biological role, involved in the biosynthesis of the thiazole moiety of thiamine. Catalyzes the conversion of NAD and glycine to adenosine diphosphate 5-(2-hydroxyethyl)-4-methylthiazole-2-carboxylate (ADT), an adenylated thiazole intermediate, using free sulfide as a source of sulfur. The protein is Thiamine thiazole synthase of Thermococcus kodakarensis (strain ATCC BAA-918 / JCM 12380 / KOD1) (Pyrococcus kodakaraensis (strain KOD1)).